A 427-amino-acid chain; its full sequence is NAD kinase 2, mitochondrial (427 aa).

A mitochondrion-targeting transit peptide spans methionine 1 to alanine 33.

Belongs to the NAD kinase family. As to quaternary structure, homodimer.

It localises to the mitochondrion. The catalysed reaction is NAD(+) + ATP = ADP + NADP(+) + H(+). Mitochondrial NAD(+) kinase that phosphorylates NAD(+) to yield NADP(+). Can use both ATP or inorganic polyphosphate as the phosphoryl donor. The chain is NAD kinase 2, mitochondrial (nadk2) from Xenopus tropicalis (Western clawed frog).